Consider the following 275-residue polypeptide: Ribosomal RNA small subunit methyltransferase A (275 aa).

S-adenosyl-L-methionine is bound by residues N27, L29, G54, E76, D102, and N123.

The protein belongs to the class I-like SAM-binding methyltransferase superfamily. rRNA adenine N(6)-methyltransferase family. RsmA subfamily.

It is found in the cytoplasm. It catalyses the reaction adenosine(1518)/adenosine(1519) in 16S rRNA + 4 S-adenosyl-L-methionine = N(6)-dimethyladenosine(1518)/N(6)-dimethyladenosine(1519) in 16S rRNA + 4 S-adenosyl-L-homocysteine + 4 H(+). In terms of biological role, specifically dimethylates two adjacent adenosines (A1518 and A1519) in the loop of a conserved hairpin near the 3'-end of 16S rRNA in the 30S particle. May play a critical role in biogenesis of 30S subunits. This is Ribosomal RNA small subunit methyltransferase A from Chelativorans sp. (strain BNC1).